Consider the following 286-residue polypeptide: Polyamine aminopropyltransferase (286 aa).

The region spanning 5 to 238 is the PABS domain; the sequence is PLWHETLHDH…GIMTFAWASD (234 aa). Q33 contributes to the S-methyl-5'-thioadenosine binding site. 2 residues coordinate spermidine: H64 and D88. S-methyl-5'-thioadenosine is bound by residues E108 and 140–141; that span reads DG. D158 functions as the Proton acceptor in the catalytic mechanism. 158–161 provides a ligand contact to spermidine; the sequence is DCTD. S-methyl-5'-thioadenosine is bound at residue P165.

It belongs to the spermidine/spermine synthase family. Homodimer or homotetramer.

It is found in the cytoplasm. It catalyses the reaction S-adenosyl 3-(methylsulfanyl)propylamine + putrescine = S-methyl-5'-thioadenosine + spermidine + H(+). It participates in amine and polyamine biosynthesis; spermidine biosynthesis; spermidine from putrescine: step 1/1. Its function is as follows. Catalyzes the irreversible transfer of a propylamine group from the amino donor S-adenosylmethioninamine (decarboxy-AdoMet) to putrescine (1,4-diaminobutane) to yield spermidine. This is Polyamine aminopropyltransferase from Klebsiella pneumoniae subsp. pneumoniae (strain ATCC 700721 / MGH 78578).